The chain runs to 59 residues: Large ribosomal subunit protein bL32 (59 aa).

Residues Met1–Asn15 show a composition bias toward basic residues. Residues Met1 to Met48 form a disordered region.

Belongs to the bacterial ribosomal protein bL32 family.

This is Large ribosomal subunit protein bL32 from Opitutus terrae (strain DSM 11246 / JCM 15787 / PB90-1).